Here is a 593-residue protein sequence, read N- to C-terminus: Eukaryotic peptide chain release factor subunit 1 (593 aa).

It belongs to the eukaryotic release factor 1 family. As to quaternary structure, heterodimer of two subunits, one of which binds GTP.

The protein resides in the cytoplasm. In terms of biological role, directs the termination of nascent peptide synthesis (translation) in response to the termination codons UAA, UAG and UGA. This Caenorhabditis elegans protein is Eukaryotic peptide chain release factor subunit 1.